The following is a 122-amino-acid chain: Large ribosomal subunit protein uL14 (122 aa).

It belongs to the universal ribosomal protein uL14 family. In terms of assembly, part of the 50S ribosomal subunit. Forms a cluster with proteins L3 and L19. In the 70S ribosome, L14 and L19 interact and together make contacts with the 16S rRNA in bridges B5 and B8.

In terms of biological role, binds to 23S rRNA. Forms part of two intersubunit bridges in the 70S ribosome. This Chlamydia pneumoniae (Chlamydophila pneumoniae) protein is Large ribosomal subunit protein uL14.